Consider the following 965-residue polypeptide: Phosphoenolpyruvate carboxylase (965 aa).

Residue serine 11 is modified to Phosphoserine. Catalysis depends on residues histidine 173 and lysine 601.

This sequence belongs to the PEPCase type 1 family. In terms of assembly, homotetramer. Mg(2+) serves as cofactor.

It is found in the cytoplasm. The catalysed reaction is oxaloacetate + phosphate = phosphoenolpyruvate + hydrogencarbonate. It functions in the pathway photosynthesis; C3 acid pathway. With respect to regulation, by light-reversible phosphorylation. Its function is as follows. Through the carboxylation of phosphoenolpyruvate (PEP) it forms oxaloacetate, a four-carbon dicarboxylic acid source for the tricarboxylic acid cycle. This is Phosphoenolpyruvate carboxylase (PPC1) from Solanum tuberosum (Potato).